The sequence spans 346 residues: Holliday junction branch migration complex subunit RuvB (346 aa).

Residues 2–183 (TDDRIIGAGA…FGIVQRLEFY (182 aa)) are large ATPase domain (RuvB-L). ATP-binding positions include Ile22, Arg23, Gly64, Lys67, Thr68, Thr69, 130 to 132 (EDF), Arg173, Tyr183, and Arg220. Thr68 contributes to the Mg(2+) binding site. Residues 184–254 (SVEELTRIVR…VAQAAMKMLK (71 aa)) form a small ATPAse domain (RuvB-S) region. The head domain (RuvB-H) stretch occupies residues 257-346 (PEGFDELDRR…DLFAEVPDVG (90 aa)). DNA-binding residues include Arg293, Arg312, and Arg317.

This sequence belongs to the RuvB family. In terms of assembly, homohexamer. Forms an RuvA(8)-RuvB(12)-Holliday junction (HJ) complex. HJ DNA is sandwiched between 2 RuvA tetramers; dsDNA enters through RuvA and exits via RuvB. An RuvB hexamer assembles on each DNA strand where it exits the tetramer. Each RuvB hexamer is contacted by two RuvA subunits (via domain III) on 2 adjacent RuvB subunits; this complex drives branch migration. In the full resolvosome a probable DNA-RuvA(4)-RuvB(12)-RuvC(2) complex forms which resolves the HJ.

It is found in the cytoplasm. The enzyme catalyses ATP + H2O = ADP + phosphate + H(+). The RuvA-RuvB-RuvC complex processes Holliday junction (HJ) DNA during genetic recombination and DNA repair, while the RuvA-RuvB complex plays an important role in the rescue of blocked DNA replication forks via replication fork reversal (RFR). RuvA specifically binds to HJ cruciform DNA, conferring on it an open structure. The RuvB hexamer acts as an ATP-dependent pump, pulling dsDNA into and through the RuvAB complex. RuvB forms 2 homohexamers on either side of HJ DNA bound by 1 or 2 RuvA tetramers; 4 subunits per hexamer contact DNA at a time. Coordinated motions by a converter formed by DNA-disengaged RuvB subunits stimulates ATP hydrolysis and nucleotide exchange. Immobilization of the converter enables RuvB to convert the ATP-contained energy into a lever motion, pulling 2 nucleotides of DNA out of the RuvA tetramer per ATP hydrolyzed, thus driving DNA branch migration. The RuvB motors rotate together with the DNA substrate, which together with the progressing nucleotide cycle form the mechanistic basis for DNA recombination by continuous HJ branch migration. Branch migration allows RuvC to scan DNA until it finds its consensus sequence, where it cleaves and resolves cruciform DNA. The sequence is that of Holliday junction branch migration complex subunit RuvB from Stenotrophomonas maltophilia (strain K279a).